A 344-amino-acid chain; its full sequence is Phosphate acyltransferase (344 aa).

Belongs to the PlsX family. In terms of assembly, homodimer. Probably interacts with PlsY.

The protein localises to the cytoplasm. The catalysed reaction is a fatty acyl-[ACP] + phosphate = an acyl phosphate + holo-[ACP]. It participates in lipid metabolism; phospholipid metabolism. Catalyzes the reversible formation of acyl-phosphate (acyl-PO(4)) from acyl-[acyl-carrier-protein] (acyl-ACP). This enzyme utilizes acyl-ACP as fatty acyl donor, but not acyl-CoA. In Thermosynechococcus vestitus (strain NIES-2133 / IAM M-273 / BP-1), this protein is Phosphate acyltransferase.